A 162-amino-acid chain; its full sequence is NAD(P)H-quinone oxidoreductase subunit N (162 aa).

It belongs to the complex I NdhN subunit family. NDH-1 can be composed of about 15 different subunits; different subcomplexes with different compositions have been identified which probably have different functions.

The protein localises to the cellular thylakoid membrane. It catalyses the reaction a plastoquinone + NADH + (n+1) H(+)(in) = a plastoquinol + NAD(+) + n H(+)(out). The enzyme catalyses a plastoquinone + NADPH + (n+1) H(+)(in) = a plastoquinol + NADP(+) + n H(+)(out). Its function is as follows. NDH-1 shuttles electrons from an unknown electron donor, via FMN and iron-sulfur (Fe-S) centers, to quinones in the respiratory and/or the photosynthetic chain. The immediate electron acceptor for the enzyme in this species is believed to be plastoquinone. Couples the redox reaction to proton translocation, and thus conserves the redox energy in a proton gradient. Cyanobacterial NDH-1 also plays a role in inorganic carbon-concentration. This is NAD(P)H-quinone oxidoreductase subunit N from Nostoc sp. (strain PCC 7120 / SAG 25.82 / UTEX 2576).